An 870-amino-acid polypeptide reads, in one-letter code: DNA mismatch repair protein MutS (870 aa).

629–636 serves as a coordination point for ATP; it reads GPNMGGKS.

It belongs to the DNA mismatch repair MutS family.

This protein is involved in the repair of mismatches in DNA. It is possible that it carries out the mismatch recognition step. This protein has a weak ATPase activity. The protein is DNA mismatch repair protein MutS of Polaromonas naphthalenivorans (strain CJ2).